The chain runs to 982 residues: Polyribonucleotide nucleotidyltransferase 2, mitochondrial (982 aa).

The N-terminal 39 residues, 1–39 (MSMAVASLRLLARGGRRRARFPAPLSVPGGRAAFLSGAA), are a transit peptide targeting the mitochondrion. Positions 624–678 (PRLATLSFSSDSLRKLLFHRKKIEQETGARVSVSDGTVTIVAKTQPIMDKAIEKV) constitute a KH domain. Positions 689–757 (GRTYKGVVSS…LRGNIKLSLK (69 aa)) constitute an S1 motif 1 domain. 2 disordered regions span residues 792-814 (PSKD…EETP) and 832-892 (QDVT…NDVL). Low complexity-rich tracts occupy residues 846 to 855 (AKSSPKLSKP) and 868 to 877 (KKTSGASTTA). Positions 920-982 (GDVVTAKVYQ…KGIPVFSLLD (63 aa)) constitute an S1 motif 2 domain.

This sequence belongs to the polyribonucleotide nucleotidyltransferase family.

The protein localises to the mitochondrion. It carries out the reaction RNA(n+1) + phosphate = RNA(n) + a ribonucleoside 5'-diphosphate. Its function is as follows. Involved in the 3'-end maturation of mitochondrial mRNAs, rRNAs and tRNAs. Functions as a poly(A) mRNA 3'-5' degrading phosphorylase. The polypeptide is Polyribonucleotide nucleotidyltransferase 2, mitochondrial (PNP2) (Oryza sativa subsp. japonica (Rice)).